Reading from the N-terminus, the 191-residue chain is Peptidyl-tRNA hydrolase (191 aa).

Tyrosine 17 contributes to the tRNA binding site. Histidine 22 (proton acceptor) is an active-site residue. Tyrosine 68, asparagine 70, and asparagine 116 together coordinate tRNA.

This sequence belongs to the PTH family. In terms of assembly, monomer.

It localises to the cytoplasm. The catalysed reaction is an N-acyl-L-alpha-aminoacyl-tRNA + H2O = an N-acyl-L-amino acid + a tRNA + H(+). Functionally, hydrolyzes ribosome-free peptidyl-tRNAs (with 1 or more amino acids incorporated), which drop off the ribosome during protein synthesis, or as a result of ribosome stalling. In terms of biological role, catalyzes the release of premature peptidyl moieties from peptidyl-tRNA molecules trapped in stalled 50S ribosomal subunits, and thus maintains levels of free tRNAs and 50S ribosomes. This Mycobacterium avium (strain 104) protein is Peptidyl-tRNA hydrolase.